The chain runs to 206 residues: NADH-quinone oxidoreductase subunit C (206 aa).

This sequence belongs to the complex I 30 kDa subunit family. NDH-1 is composed of 14 different subunits. Subunits NuoB, C, D, E, F, and G constitute the peripheral sector of the complex.

The protein resides in the cell inner membrane. The enzyme catalyses a quinone + NADH + 5 H(+)(in) = a quinol + NAD(+) + 4 H(+)(out). Functionally, NDH-1 shuttles electrons from NADH, via FMN and iron-sulfur (Fe-S) centers, to quinones in the respiratory chain. The immediate electron acceptor for the enzyme in this species is believed to be ubiquinone. Couples the redox reaction to proton translocation (for every two electrons transferred, four hydrogen ions are translocated across the cytoplasmic membrane), and thus conserves the redox energy in a proton gradient. This Nitrosomonas europaea (strain ATCC 19718 / CIP 103999 / KCTC 2705 / NBRC 14298) protein is NADH-quinone oxidoreductase subunit C.